The sequence spans 156 residues: Ribosomal RNA large subunit methyltransferase H (156 aa).

S-adenosyl-L-methionine contacts are provided by residues leucine 73, glycine 104, and 123 to 128; that span reads LSSLTL.

Belongs to the RNA methyltransferase RlmH family. Homodimer.

The protein resides in the cytoplasm. It carries out the reaction pseudouridine(1915) in 23S rRNA + S-adenosyl-L-methionine = N(3)-methylpseudouridine(1915) in 23S rRNA + S-adenosyl-L-homocysteine + H(+). Its function is as follows. Specifically methylates the pseudouridine at position 1915 (m3Psi1915) in 23S rRNA. The sequence is that of Ribosomal RNA large subunit methyltransferase H from Ralstonia pickettii (strain 12J).